A 320-amino-acid chain; its full sequence is MYSLEEFNNQAINADFQRNNMFSCVFATTPSTKSSSLISSISNFSYNNLGLNSDWLGLTQGDINQGITTLITAGTQKLIRKSGVSKYLIGAMSQRTVQSLLGSFTVGTYLIDFFNMAYNSSGLMIYSVKMPENRLSYETDWNYNSPNIRITGRELDPLVISFRMDSEACNYRAMQDWVNSVQDPVTGLRALPQDVEADIQVNLHSRNGLPHTAVMFTMHSISVSAPELSYDGDNQITTFDVTFAYRVMQAGAVDRQRALEWLESAAINGIQSVLGNSGGVTGLSNSLSRLSRLGGTAGSISNINTMTGIVNSQSKILGAI.

Homohexamer. The tube second annulus is composed of a gp54 hexameric ring. Interacts with the tail tube protein gp19. Interacts with the first layer of sheath proteins gp18. Part of the baseplate macromolecular complex which consists of gp5, gp5.4, gp27 (central spike complex); gp6, gp25, gp53 (inner baseplate); gp7, gp8 (intermediate baseplate); gp9, gp10, gp11, gp12 (peripheral); gp48 and gp54 (proximal region of the tail tube).

It localises to the virion. Baseplate protein that forms, together with gp48, the baseplate-tail tube junction. The tail tube first 2 annuli are formed by gp48 and gp54, which are in continuation of the spike complex. Involved in the tail assembly. Morphogenesis of the baseplate is completed by association of gp48 and gp54, which bind the upper part of the baseplate dome to form the platform for polymerization of the tail tube. The chain is Baseplate tail-tube junction protein gp54 (54) from Escherichia coli (Bacteriophage T4).